The sequence spans 376 residues: Actin, macronuclear (376 aa).

This sequence belongs to the actin family.

Its subcellular location is the cytoplasm. The protein resides in the cytoskeleton. It carries out the reaction ATP + H2O = ADP + phosphate + H(+). Functionally, actins are highly conserved proteins that are involved in various types of cell motility and are ubiquitously expressed in all eukaryotic cells. In Tetrahymena thermophila, this protein is Actin, macronuclear.